The sequence spans 213 residues: Probable nicotinate-nucleotide adenylyltransferase (213 aa).

The protein belongs to the NadD family.

The enzyme catalyses nicotinate beta-D-ribonucleotide + ATP + H(+) = deamido-NAD(+) + diphosphate. It functions in the pathway cofactor biosynthesis; NAD(+) biosynthesis; deamido-NAD(+) from nicotinate D-ribonucleotide: step 1/1. Catalyzes the reversible adenylation of nicotinate mononucleotide (NaMN) to nicotinic acid adenine dinucleotide (NaAD). In Escherichia coli O45:K1 (strain S88 / ExPEC), this protein is Probable nicotinate-nucleotide adenylyltransferase.